The sequence spans 358 residues: Prostaglandin E2 receptor EP2 subtype (358 aa).

The Extracellular portion of the chain corresponds to 1-23 (MGNASNDSQSEDCETRQWLPPGE). Asn-3 and Asn-6 each carry an N-linked (GlcNAc...) asparagine glycan. The helical transmembrane segment at 24–47 (SPAISSVMFSAGVLGNLIALALLA) threads the bilayer. Residues 48–65 (RRWRGDVGCSAGRRSSLS) lie on the Cytoplasmic side of the membrane. The chain crosses the membrane as a helical span at residues 66-91 (LFHVLVTELVFTDLLGTCLISPVVLA). Over 92-111 (SYARNQTLVALAPESRACTY) the chain is Extracellular. N-linked (GlcNAc...) asparagine glycosylation is present at Asn-96. Cys-109 and Cys-187 are disulfide-bonded. A helical transmembrane segment spans residues 112–132 (FAFAMTFFSLATMLMLFAMAL). The Cytoplasmic segment spans residues 133–151 (ERYLSIGHPYFYQRRVSRS). The chain crosses the membrane as a helical span at residues 152-176 (GGLAVLPVIYAVSLLFCSLPLLDYG). Residues 177–198 (QYVQYCPGTWCFIRHGRTAYLQ) lie on the Extracellular side of the membrane. Residues 199–223 (LYATLLLLLIVSVLACNFSVILNLI) form a helical membrane-spanning segment. Residues 224–262 (RMHRRSRRSRCGPSLGSGRGGPGARRRGERVSMAEETDH) lie on the Cytoplasmic side of the membrane. Positions 231–253 (RSRCGPSLGSGRGGPGARRRGER) are disordered. A helical transmembrane segment spans residues 263 to 286 (LILLAIMTITFAVCSLPFTIFAYM). Asn-287 carries an N-linked (GlcNAc...) asparagine glycan. Residues 287-299 (NETSSRKEKWDLQ) lie on the Extracellular side of the membrane. A helical transmembrane segment spans residues 300-323 (ALRFLSINSIIDPWVFAILRPPVL). At 324–358 (RLMRSVLCCRISLRTQDATQTSCSTQSDASKQADL) the chain is on the cytoplasmic side.

This sequence belongs to the G-protein coupled receptor 1 family. As to expression, placenta and lung.

Its subcellular location is the cell membrane. Receptor for prostaglandin E2 (PGE2). The activity of this receptor is mediated by G(s) proteins that stimulate adenylate cyclase. The subsequent raise in intracellular cAMP is responsible for the relaxing effect of this receptor on smooth muscle. The polypeptide is Prostaglandin E2 receptor EP2 subtype (PTGER2) (Homo sapiens (Human)).